Here is a 37-residue protein sequence, read N- to C-terminus: Large ribosomal subunit protein bL36B (37 aa).

The protein belongs to the bacterial ribosomal protein bL36 family.

This is Large ribosomal subunit protein bL36B from Saccharopolyspora erythraea (strain ATCC 11635 / DSM 40517 / JCM 4748 / NBRC 13426 / NCIMB 8594 / NRRL 2338).